A 218-amino-acid chain; its full sequence is 3,4-dihydroxy-2-butanone 4-phosphate synthase (218 aa).

D-ribulose 5-phosphate is bound by residues 38 to 39, Asp43, 151 to 155, and Glu175; these read RE and RRGHT. Residue Glu39 coordinates Mg(2+). Mg(2+) is bound at residue His154.

It belongs to the DHBP synthase family. In terms of assembly, homodimer. Mg(2+) is required as a cofactor. Requires Mn(2+) as cofactor.

It carries out the reaction D-ribulose 5-phosphate = (2S)-2-hydroxy-3-oxobutyl phosphate + formate + H(+). It participates in cofactor biosynthesis; riboflavin biosynthesis; 2-hydroxy-3-oxobutyl phosphate from D-ribulose 5-phosphate: step 1/1. Catalyzes the conversion of D-ribulose 5-phosphate to formate and 3,4-dihydroxy-2-butanone 4-phosphate. The protein is 3,4-dihydroxy-2-butanone 4-phosphate synthase of Vibrio vulnificus (strain CMCP6).